Consider the following 94-residue polypeptide: Integration host factor subunit beta (94 aa).

This sequence belongs to the bacterial histone-like protein family. In terms of assembly, heterodimer of an alpha and a beta chain.

This protein is one of the two subunits of integration host factor, a specific DNA-binding protein that functions in genetic recombination as well as in transcriptional and translational control. The protein is Integration host factor subunit beta of Vibrio atlanticus (strain LGP32) (Vibrio splendidus (strain Mel32)).